Consider the following 128-residue polypeptide: Con-Ins F1 (128 aa).

Residues 1–24 form the signal peptide; that stretch reads MTTSSYFLLVTLGLLLYVCRSSFG. 4 disulfides stabilise this stretch: C29/C104, C41/C107, C53/C120, and C106/C111. A propeptide spans 59 to 89 (c peptide); the sequence is LQGGTGKKRGRASPLRKRRAFLSMLKARAKR. Residue E115 is modified to 4-carboxyglutamate; partial. The residue at position 127 (S127) is a Serine amide.

This sequence belongs to the insulin family. In terms of assembly, heterodimer of A and B chains; disulfide-linked. As to expression, expressed by the venom gland.

The protein localises to the secreted. In terms of biological role, this venom insulin facilitates prey capture by rapidly inducing hypoglycemic shock. Intraperitoneal injection of this peptide into zebrafish lowers blood glucose with the same potency than human insulin. In vivo, when applied to water, this peptide reduces overall locomotor activity of zebrafish larvae, observed as a significant decrease in the percentage of time spent swimming and movement frequency. The protein is Con-Ins F1 of Conus floridulus (Cone snail).